The chain runs to 340 residues: Glycerol-3-phosphate dehydrogenase [NAD(P)+] (340 aa).

S11, W12, R33, and K106 together coordinate NADPH. Residues K106, G137, and S139 each coordinate sn-glycerol 3-phosphate. NADPH is bound at residue A141. Sn-glycerol 3-phosphate contacts are provided by K192, D245, S255, R256, and N257. The active-site Proton acceptor is the K192. R256 is an NADPH binding site. NADPH is bound by residues V280 and E282.

Belongs to the NAD-dependent glycerol-3-phosphate dehydrogenase family.

It is found in the cytoplasm. The catalysed reaction is sn-glycerol 3-phosphate + NAD(+) = dihydroxyacetone phosphate + NADH + H(+). It catalyses the reaction sn-glycerol 3-phosphate + NADP(+) = dihydroxyacetone phosphate + NADPH + H(+). Its pathway is membrane lipid metabolism; glycerophospholipid metabolism. In terms of biological role, catalyzes the reduction of the glycolytic intermediate dihydroxyacetone phosphate (DHAP) to sn-glycerol 3-phosphate (G3P), the key precursor for phospholipid synthesis. This is Glycerol-3-phosphate dehydrogenase [NAD(P)+] from Bacillus cereus (strain ATCC 10987 / NRS 248).